A 189-amino-acid chain; its full sequence is MVPPKPALWALLLALLGTAPSRAYSPACSVPDVLRHYRAIIFEDLQAAVKWGGAGAEKTRPGSRHFHFIQKNLTRPGSSGRRGRPRASCGAQKEHSILLSISSLGRTLRGAVAGGRRGALERAAWTVAVRTEAVMRRHCRTLRQRSRRPKMRPARRRGGRRQLLLRALDAVATCWEKLFALRAPASRDS.

The signal sequence occupies residues Met-1 to Ala-23. Asn-72 carries an N-linked (GlcNAc...) asparagine glycan.

This is an uncharacterized protein from Homo sapiens (Human).